A 515-amino-acid polypeptide reads, in one-letter code: Histidine ammonia-lyase (515 aa).

The segment at residues 146–148 (ASG) is a cross-link (5-imidazolinone (Ala-Gly)). Serine 147 is subject to 2,3-didehydroalanine (Ser).

It belongs to the PAL/histidase family. Post-translationally, contains an active site 4-methylidene-imidazol-5-one (MIO), which is formed autocatalytically by cyclization and dehydration of residues Ala-Ser-Gly.

It localises to the cytoplasm. The catalysed reaction is L-histidine = trans-urocanate + NH4(+). Its pathway is amino-acid degradation; L-histidine degradation into L-glutamate; N-formimidoyl-L-glutamate from L-histidine: step 1/3. The sequence is that of Histidine ammonia-lyase (hutH) from Ralstonia nicotianae (strain ATCC BAA-1114 / GMI1000) (Ralstonia solanacearum).